The chain runs to 428 residues: 3-phosphoshikimate 1-carboxyvinyltransferase (428 aa).

K22, S23, and R27 together coordinate 3-phosphoshikimate. Position 22 (K22) interacts with phosphoenolpyruvate. Phosphoenolpyruvate is bound by residues G96 and R124. S169, S170, Q171, S197, D313, N336, and K340 together coordinate 3-phosphoshikimate. Residue Q171 participates in phosphoenolpyruvate binding. D313 (proton acceptor) is an active-site residue. Phosphoenolpyruvate-binding residues include R344, R386, and K411.

It belongs to the EPSP synthase family. As to quaternary structure, monomer.

The protein resides in the cytoplasm. The enzyme catalyses 3-phosphoshikimate + phosphoenolpyruvate = 5-O-(1-carboxyvinyl)-3-phosphoshikimate + phosphate. Its pathway is metabolic intermediate biosynthesis; chorismate biosynthesis; chorismate from D-erythrose 4-phosphate and phosphoenolpyruvate: step 6/7. Functionally, catalyzes the transfer of the enolpyruvyl moiety of phosphoenolpyruvate (PEP) to the 5-hydroxyl of shikimate-3-phosphate (S3P) to produce enolpyruvyl shikimate-3-phosphate and inorganic phosphate. The chain is 3-phosphoshikimate 1-carboxyvinyltransferase from Proteus mirabilis (strain HI4320).